Consider the following 206-residue polypeptide: MILSDKDIFNYVTSKRVLIEPFNSKFVGPCSYDVTLGSEFIKYNEDVYDVKKTLNHSKFKIENSVMVCPLNHHLDETIIKNYKEKYNVDCVVSGGLLGTTNEYVELPNDVCAQYQGRSSFGRVFLQTHQTAGWIDSGFKGKITLEIVAYDKPVILYKNQRVGQLIFSKTLSPADIGYSDRKCSKYAGQTSVMASLIKKDFETNEEE.

Residues 117-122 (RSSFGR), Asp135, 143-145 (TLE), Gln163, Tyr177, Lys184, and Gln188 contribute to the dCTP site. Glu145 functions as the Proton donor/acceptor in the catalytic mechanism.

The protein belongs to the dCTP deaminase family. Homotrimer.

It carries out the reaction dCTP + 2 H2O = dUMP + NH4(+) + diphosphate. It functions in the pathway pyrimidine metabolism; dUMP biosynthesis; dUMP from dCTP: step 1/1. Bifunctional enzyme that catalyzes both the deamination of dCTP to dUTP and the hydrolysis of dUTP to dUMP without releasing the toxic dUTP intermediate. This Methanococcus maripaludis (strain DSM 14266 / JCM 13030 / NBRC 101832 / S2 / LL) protein is dCTP deaminase, dUMP-forming.